The sequence spans 209 residues: Uridine kinase (209 aa).

Residue 12–19 (GGTGSGKS) coordinates ATP.

The protein belongs to the uridine kinase family.

Its subcellular location is the cytoplasm. It catalyses the reaction uridine + ATP = UMP + ADP + H(+). The enzyme catalyses cytidine + ATP = CMP + ADP + H(+). The protein operates within pyrimidine metabolism; CTP biosynthesis via salvage pathway; CTP from cytidine: step 1/3. It functions in the pathway pyrimidine metabolism; UMP biosynthesis via salvage pathway; UMP from uridine: step 1/1. The chain is Uridine kinase from Clostridium tetani (strain Massachusetts / E88).